A 780-amino-acid chain; its full sequence is WD repeat-containing protein 27 (780 aa).

WD repeat units lie at residues 3-56 (TPPE…VWSS), 61-100 (HQLLTLQGHHQLITAVVFGNQIDPLLLCSASEDYIIMWNV), 111-150 (LTPRGTILGSLLQTVLCLRFSLDDRAIAVCAGNKISVMDV), 154-193 (SVLVELKGHQGSVTAVEFCPWQAHTLISVSEDRSFKVWDF), 200-236 (YSSSILTAYPLLNLLINEENQQLVTGSADGQLWIFSL), 291-335 (FPIL…LASF), 342-385 (HFKE…VLEI), 500-540 (NLSR…VFNA), 544-582 (GPPAAFSGHDGAVSTICWSHDKRWLLSTGRDRTLRVWSV), 588-639 (MLLL…RYKP), 644-685 (KPIF…VFDL), 691-738 (AAVL…LWDL), and 752-779 (AFCTVLQDTQIRLLKWPSTQQLLSLSQP).

In Mus musculus (Mouse), this protein is WD repeat-containing protein 27 (Wdr27).